The following is a 326-amino-acid chain: uncharacterized protein (326 aa).

The next 2 membrane-spanning stretches (helical) occupy residues 9-29 (WVVLPLLRYPLLVALVLRWSL) and 33-53 (ISICLTIYTLLINAFLIANSY). 5 residues coordinate NADP(+): aspartate 120, asparagine 148, tyrosine 214, lysine 218, and threonine 252. Tyrosine 214 acts as the Proton acceptor in catalysis. Lysine 218 functions as the Lowers pKa of active site Tyr in the catalytic mechanism.

Belongs to the short-chain dehydrogenases/reductases (SDR) family.

It localises to the mitochondrion membrane. Functionally, involved in the resistance to DNA-damaging agents. This is an uncharacterized protein from Saccharomyces cerevisiae (strain ATCC 204508 / S288c) (Baker's yeast).